Here is a 173-residue protein sequence, read N- to C-terminus: Crossover junction endodeoxyribonuclease RuvC (173 aa).

Active-site residues include D8, E67, and D139. Mg(2+)-binding residues include D8, E67, and D139.

The protein belongs to the RuvC family. In terms of assembly, homodimer which binds Holliday junction (HJ) DNA. The HJ becomes 2-fold symmetrical on binding to RuvC with unstacked arms; it has a different conformation from HJ DNA in complex with RuvA. In the full resolvosome a probable DNA-RuvA(4)-RuvB(12)-RuvC(2) complex forms which resolves the HJ. It depends on Mg(2+) as a cofactor.

The protein resides in the cytoplasm. It catalyses the reaction Endonucleolytic cleavage at a junction such as a reciprocal single-stranded crossover between two homologous DNA duplexes (Holliday junction).. Its function is as follows. The RuvA-RuvB-RuvC complex processes Holliday junction (HJ) DNA during genetic recombination and DNA repair. Endonuclease that resolves HJ intermediates. Cleaves cruciform DNA by making single-stranded nicks across the HJ at symmetrical positions within the homologous arms, yielding a 5'-phosphate and a 3'-hydroxyl group; requires a central core of homology in the junction. The consensus cleavage sequence is 5'-(A/T)TT(C/G)-3'. Cleavage occurs on the 3'-side of the TT dinucleotide at the point of strand exchange. HJ branch migration catalyzed by RuvA-RuvB allows RuvC to scan DNA until it finds its consensus sequence, where it cleaves and resolves the cruciform DNA. In Photorhabdus laumondii subsp. laumondii (strain DSM 15139 / CIP 105565 / TT01) (Photorhabdus luminescens subsp. laumondii), this protein is Crossover junction endodeoxyribonuclease RuvC.